The primary structure comprises 713 residues: Polyribonucleotide nucleotidyltransferase (713 aa).

Mg(2+) contacts are provided by aspartate 488 and aspartate 494. Positions 555 to 614 (PQMEIIKVPTDKIRDVIGSGGKVIRGIVDETGAKVNIDDDGTVQISAMDRKSIDAAIKMI) constitute a KH domain. The S1 motif domain occupies 624–692 (GEIYEGKVVS…ERGKVRLSMK (69 aa)).

Belongs to the polyribonucleotide nucleotidyltransferase family. Mg(2+) is required as a cofactor.

The protein localises to the cytoplasm. It carries out the reaction RNA(n+1) + phosphate = RNA(n) + a ribonucleoside 5'-diphosphate. Functionally, involved in mRNA degradation. Catalyzes the phosphorolysis of single-stranded polyribonucleotides processively in the 3'- to 5'-direction. The protein is Polyribonucleotide nucleotidyltransferase of Hyphomonas neptunium (strain ATCC 15444).